Consider the following 374-residue polypeptide: Transcription factor IIIA (374 aa).

7 C2H2-type zinc fingers span residues 23 to 47 (FHCPYEECGKKYSRPSLLEQHLRTH), 53 to 77 (FVCDYTGCSKAFYRKSHLKIHKRCH), 83 to 107 (FSCHYDGCDAQFYTQQHLERHIEVH), 113 to 138 (YACTWEGCDECFSKHQQLRSHISACH), 144 to 169 (YPCTYQDCELRFATKQKLQNHVNRAH), 204 to 226 (PSCSICGRQFKTAAHLRHHVVLH), and 236 to 261 (YHCPMEGCKKSFTRSSALKKHISVIH). The C2H2-type 8; atypical zinc-finger motif lies at 267–291 (FHCDSCGTKFGYKHMLQRHLERGTC). The segment at 349 to 374 (YSCSFPECNYRFKRLYDMHRHLNSHH) adopts a C2H2-type 9 zinc-finger fold.

The protein localises to the nucleus. Is required for correct transcription of 5S RNA genes by RNA polymerase III. Also binds the transcribed 5S RNA's. Initiates transcription of the 5S ribosomal RNA gene. This chain is Transcription factor IIIA (sfc2), found in Schizosaccharomyces pombe (strain 972 / ATCC 24843) (Fission yeast).